Reading from the N-terminus, the 65-residue chain is Large ribosomal subunit protein bL35 (65 aa).

This sequence belongs to the bacterial ribosomal protein bL35 family.

The protein is Large ribosomal subunit protein bL35 of Thermus thermophilus (strain ATCC BAA-163 / DSM 7039 / HB27).